A 1063-amino-acid polypeptide reads, in one-letter code: Probable hemoglobin and hemoglobin-haptoglobin-binding protein 1 (1063 aa).

The first 24 residues, M1 to A24, serve as a signal peptide directing secretion. Tandem repeats lie at residues Q26 to N29, Q30 to N33, Q34 to N37, Q38 to N41, Q42 to N45, Q46 to N49, and Q50 to N53. Residues Q26–N53 form a 7 X 4 AA tandem repeats of Q-P-T-N region. The segment covering T28 to N55 has biased composition (low complexity). Residues T28 to N57 form a disordered region. Residues E63–S70 carry the TonB box motif. One can recognise a TBDR plug domain in the interval N66–K200. Residues D208–F1063 form the TBDR beta-barrel domain. The TonB C-terminal box motif lies at N1046 to F1063.

The protein belongs to the TonB-dependent receptor family. Hemoglobin/haptoglobin binding protein subfamily.

It localises to the cell outer membrane. Its function is as follows. Acts as a receptor for hemoglobin or the hemoglobin/haptoglobin complex of the human host and is required for heme uptake. The polypeptide is Probable hemoglobin and hemoglobin-haptoglobin-binding protein 1 (Haemophilus influenzae (strain ATCC 51907 / DSM 11121 / KW20 / Rd)).